The primary structure comprises 467 residues: tRNA-2-methylthio-N(6)-dimethylallyladenosine synthase (467 aa).

The MTTase N-terminal domain maps to 15–135 (KKIFVKTYGC…LPEYVARLAN (121 aa)). Cys-24, Cys-60, Cys-98, Cys-177, Cys-181, and Cys-184 together coordinate [4Fe-4S] cluster. In terms of domain architecture, Radical SAM core spans 163-395 (LARGATAFLT…QALLGEQQLA (233 aa)). The TRAM domain occupies 398–461 (AGCAGRTMPV…RNSLRGRLRE (64 aa)).

Belongs to the methylthiotransferase family. MiaB subfamily. As to quaternary structure, monomer. It depends on [4Fe-4S] cluster as a cofactor.

The protein localises to the cytoplasm. The enzyme catalyses N(6)-dimethylallyladenosine(37) in tRNA + (sulfur carrier)-SH + AH2 + 2 S-adenosyl-L-methionine = 2-methylsulfanyl-N(6)-dimethylallyladenosine(37) in tRNA + (sulfur carrier)-H + 5'-deoxyadenosine + L-methionine + A + S-adenosyl-L-homocysteine + 2 H(+). Functionally, catalyzes the methylthiolation of N6-(dimethylallyl)adenosine (i(6)A), leading to the formation of 2-methylthio-N6-(dimethylallyl)adenosine (ms(2)i(6)A) at position 37 in tRNAs that read codons beginning with uridine. This is tRNA-2-methylthio-N(6)-dimethylallyladenosine synthase from Parvibaculum lavamentivorans (strain DS-1 / DSM 13023 / NCIMB 13966).